The following is a 470-amino-acid chain: L-seryl-tRNA(Sec) selenium transferase (470 aa).

N6-(pyridoxal phosphate)lysine is present on K292.

This sequence belongs to the SelA family. The cofactor is pyridoxal 5'-phosphate.

The protein resides in the cytoplasm. The catalysed reaction is L-seryl-tRNA(Sec) + selenophosphate + H(+) = L-selenocysteinyl-tRNA(Sec) + phosphate. It functions in the pathway aminoacyl-tRNA biosynthesis; selenocysteinyl-tRNA(Sec) biosynthesis; selenocysteinyl-tRNA(Sec) from L-seryl-tRNA(Sec) (bacterial route): step 1/1. Functionally, converts seryl-tRNA(Sec) to selenocysteinyl-tRNA(Sec) required for selenoprotein biosynthesis. The sequence is that of L-seryl-tRNA(Sec) selenium transferase from Moorella thermoacetica (strain ATCC 39073 / JCM 9320).